We begin with the raw amino-acid sequence, 569 residues long: Proline--tRNA ligase (569 aa).

It belongs to the class-II aminoacyl-tRNA synthetase family. ProS type 1 subfamily. As to quaternary structure, homodimer.

The protein resides in the cytoplasm. The enzyme catalyses tRNA(Pro) + L-proline + ATP = L-prolyl-tRNA(Pro) + AMP + diphosphate. In terms of biological role, catalyzes the attachment of proline to tRNA(Pro) in a two-step reaction: proline is first activated by ATP to form Pro-AMP and then transferred to the acceptor end of tRNA(Pro). As ProRS can inadvertently accommodate and process non-cognate amino acids such as alanine and cysteine, to avoid such errors it has two additional distinct editing activities against alanine. One activity is designated as 'pretransfer' editing and involves the tRNA(Pro)-independent hydrolysis of activated Ala-AMP. The other activity is designated 'posttransfer' editing and involves deacylation of mischarged Ala-tRNA(Pro). The misacylated Cys-tRNA(Pro) is not edited by ProRS. The polypeptide is Proline--tRNA ligase (Latilactobacillus sakei subsp. sakei (strain 23K) (Lactobacillus sakei subsp. sakei)).